Reading from the N-terminus, the 496-residue chain is Cyclin-dependent kinase 16 (496 aa).

The disordered stretch occupies residues 1-97 (MDRMKKIKRQ…TSSDEVQSPV (97 aa)). A Phosphoserine; by BRSK2 modification is found at S12. Residues S36, S42, S64, S65, S78, S82, and S89 each carry the phosphoserine modification. Basic and acidic residues predominate over residues 69–78 (IVHEDLKMGS). The span at 83-93 (DQASATSSDEV) shows a compositional bias: polar residues. S95 is subject to Phosphoserine; by CDK5. Phosphoserine occurs at positions 110, 119, 138, 146, 153, and 155. Positions 165–446 (YIKLDKLGEG…AEDAMKHPFF (282 aa)) constitute a Protein kinase domain. ATP contacts are provided by residues 171–179 (LGEGTYATV) and K194. At T175 the chain carries Phosphothreonine. The active-site Proton acceptor is D286. T380 carries the phosphothreonine modification. Phosphoserine is present on residues S391, S478, and S480.

It belongs to the protein kinase superfamily. CMGC Ser/Thr protein kinase family. CDC2/CDKX subfamily. In terms of assembly, found in a complex containing CABLES1, CDK17 and TDRD7. Interacts with BRSK2. Identified in a complex with NSF, syntaxin-1, synaptotagmin, SYN1, SYP and CDK5R1. Interacts with YWHAH, YWHAQ and YWHAZ. Interacts with CCNY; this interaction increases the CDK16 kinase activity. Interacts with CCNYL1; this interaction mutually increases the stability of CDK16 and CCNYL1 and increases the kinase activity of CDK16. Interacts with NSF. In terms of processing, phosphorylation of CDK16 is essential for the binding of CCNY, but also essential for the regulation of CDK16 kinase activity. Phosphorylation of CDK16 is essential for the binding of CCNYl1, but also essential for the regulation of CDK16 kinase activity. Ser-146 and Ser-153 are the most critical sites for the binding of CCNYL1 and for modulating CDK16 kinase activity. Phosphorylation at Ser-153 inhibits kinase activity. Detected in pancreas islets (at protein level). Detected in brain and pancreas.

It is found in the cytoplasm. It localises to the cytoplasmic vesicle. Its subcellular location is the secretory vesicle. The protein localises to the cell membrane. The protein resides in the synapse. It is found in the synaptosome. It catalyses the reaction L-seryl-[protein] + ATP = O-phospho-L-seryl-[protein] + ADP + H(+). The catalysed reaction is L-threonyl-[protein] + ATP = O-phospho-L-threonyl-[protein] + ADP + H(+). In terms of biological role, protein kinase that plays a role in vesicle-mediated transport processes and exocytosis. Regulates GH1 release by brain neurons. Phosphorylates NSF, and thereby regulates NSF oligomerization. Required for normal spermatogenesis. Regulates neuron differentiation and dendrite development. Plays a role in the regulation of insulin secretion in response to changes in blood glucose levels. Can phosphorylate CCNY at 'Ser-336' (in vitro). The chain is Cyclin-dependent kinase 16 (CDK16) from Homo sapiens (Human).